The chain runs to 173 residues: Alpha-crystallin A chain (173 aa).

An N-acetylmethionine modification is found at Met-1. The segment at 1–63 (MDVTIQHPWF…RTVLDSGISE (63 aa)) is required for complex formation with BFSP1 and BFSP2. A Deamidated glutamine; partial modification is found at Gln-6. Ser-45 bears the Phosphoserine mark. Gln-50 and Gln-90 each carry deamidated glutamine; partial. Residues 52–162 (LFRTVLDSGI…SHSERAIPVS (111 aa)) form the sHSP domain. Lys-99 carries the post-translational modification N6-acetyllysine. Residue His-100 coordinates Zn(2+). Asn-101 bears the Deamidated asparagine; partial mark. Zn(2+)-binding residues include Glu-102 and His-107. Position 122 is a phosphoserine (Ser-122). Position 123 is a deamidated asparagine; partial (Asn-123). Cys-131 and Cys-142 are joined by a disulfide. The residue at position 147 (Gln-147) is a Deamidated glutamine; partial. Positions 149–173 (GMDASHSERAIPVSREEKPSSAPSS) are disordered. Over residues 153–167 (SHSERAIPVSREEKP) the composition is skewed to basic and acidic residues. Residue His-154 coordinates Zn(2+). Residue Ser-162 is glycosylated (O-linked (GlcNAc) serine).

It belongs to the small heat shock protein (HSP20) family. Heteromer composed of three CRYAA and one CRYAB subunits. Inter-subunit bridging via zinc ions enhances stability, which is crucial as there is no protein turn over in the lens. Can also form homodimers and homotetramers (dimers of dimers) which serve as the building blocks of homooligomers. Within homooligomers, the zinc-binding motif is created from residues of 3 different molecules. His-100 and Glu-102 from one molecule are ligands of the zinc ion, and His-107 and His-154 residues from additional molecules complete the site with tetrahedral coordination geometry. Part of a complex required for lens intermediate filament formation composed of BFSP1, BFSP2 and CRYAA. Post-translationally, undergoes age-dependent proteolytical cleavage at the C-terminus.

It is found in the cytoplasm. Its subcellular location is the nucleus. Contributes to the transparency and refractive index of the lens. In its oxidized form (absence of intramolecular disulfide bond), acts as a chaperone, preventing aggregation of various proteins under a wide range of stress conditions. Required for the correct formation of lens intermediate filaments as part of a complex composed of BFSP1, BFSP2 and CRYAA. This chain is Alpha-crystallin A chain (CRYAA), found in Loxodonta africana (African elephant).